The primary structure comprises 420 residues: Structure-specific endonuclease subunit SLX1 homolog (420 aa).

The GIY-YIG domain maps to 19–106 (SSDNTYPWQN…QHPLKSRRLR (88 aa)). Disordered stretches follow at residues 237-306 (SVEE…AAVN) and 311-330 (DDSADDGTTDGNEDGPDDVA). Residues 247-266 (PSSCSVPPSTGSSAAPTPGA) are compositionally biased toward low complexity. Residues 279-301 (VDPRLDSDDRDDNHQFESPDNHE) show a composition bias toward basic and acidic residues. Residues 311 to 327 (DDSADDGTTDGNEDGPD) are compositionally biased toward acidic residues. The SLX1-type zinc finger occupies 348 to 405 (CGHCHQSVYQELCIVCLNATCTYRAHLLCAAQAAVHPLGQSSPSETRLVPLRHSCPRC).

It belongs to the SLX1 family. In terms of assembly, forms a heterodimer with a member of the SLX4 family. Requires a divalent metal cation as cofactor.

The protein localises to the nucleus. In terms of biological role, catalytic subunit of a heterodimeric structure-specific endonuclease that resolves DNA secondary structures generated during DNA repair and recombination. Has endonuclease activity towards branched DNA substrates, introducing single-strand cuts in duplex DNA close to junctions with ss-DNA. The protein is Structure-specific endonuclease subunit SLX1 homolog of Monosiga brevicollis (Choanoflagellate).